We begin with the raw amino-acid sequence, 514 residues long: Protein spinster homolog 3 (514 aa).

The tract at residues 1–22 (MSTECLKPQTGGPQSQSLSQGG) is disordered. The segment covering 9–21 (QTGGPQSQSLSQG) has biased composition (low complexity). 12 helical membrane passes run 54-74 (VLCY…GVLL), 88-108 (GLLQ…FGYL), 116-136 (AILS…SFIS), 149-169 (FVGT…GDLF), 176-196 (CALA…YVLG), 212-232 (LMPC…PDVP), 264-284 (FVFS…LGFW), 313-333 (LIFG…GAEA), 347-367 (LICA…LILA), 376-396 (VFLA…ADIL), 415-435 (VAHV…SSVL), and 453-473 (SFLC…LTAL). The tract at residues 482 to 514 (ARQPGKGTLDSKDIASRNTESQGLLSGTSTPTE) is disordered. Residues 497–514 (SRNTESQGLLSGTSTPTE) are compositionally biased toward polar residues.

It belongs to the major facilitator superfamily. Spinster (TC 2.A.1.49) family.

The protein localises to the membrane. Its function is as follows. Sphingolipid transporter. The sequence is that of Protein spinster homolog 3 (Spns3) from Mus musculus (Mouse).